We begin with the raw amino-acid sequence, 76 residues long: Parvalbumin beta 3 (76 aa).

At A1 the chain carries N-acetylalanine. Residues 31-66 form the EF-hand domain; sequence KSPEEVKKFFAIIDQDHSGFIEEEELKLFLQTFSAG. Ca(2+) contacts are provided by D44, D46, S48, F50, E52, and E55.

It belongs to the parvalbumin family.

In muscle, parvalbumin is thought to be involved in relaxation after contraction. It binds two calcium ions. The protein is Parvalbumin beta 3 of Merluccius polylepis (Southern hake).